Consider the following 545-residue polypeptide: Glutamine-dependent NAD(+) synthetase (545 aa).

Residues 5 to 247 (LRIAMAQFDF…DQWLVVDYMR (243 aa)) form the CN hydrolase domain. The active-site Proton acceptor; for glutaminase activity is the Glu46. Residue Lys113 is the For glutaminase activity of the active site. Residue Tyr119 coordinates L-glutamine. Catalysis depends on Cys151, which acts as the Nucleophile; for glutaminase activity. L-glutamine contacts are provided by Ser177 and Lys183. The interval 269-545 (VWRAVVRGVQ…RYPISNAYRG (277 aa)) is ligase. Residue 292 to 299 (GLSGGIDS) coordinates ATP. Asn375 provides a ligand contact to deamido-NAD(+). Thr399 serves as a coordination point for ATP. Deamido-NAD(+) contacts are provided by Glu404 and Lys516.

In the C-terminal section; belongs to the NAD synthetase family.

It carries out the reaction deamido-NAD(+) + L-glutamine + ATP + H2O = L-glutamate + AMP + diphosphate + NAD(+) + H(+). Its pathway is cofactor biosynthesis; NAD(+) biosynthesis; NAD(+) from deamido-NAD(+) (L-Gln route): step 1/1. Catalyzes the ATP-dependent amidation of deamido-NAD to form NAD. Uses L-glutamine as a nitrogen source. This Xylella fastidiosa (strain Temecula1 / ATCC 700964) protein is Glutamine-dependent NAD(+) synthetase.